We begin with the raw amino-acid sequence, 468 residues long: MTQVSTPVRTRFAPSPTGFIHLGNIRSALYPWAFARATGGTFVLRIEDTDVERSSQAAVDVIVEGMKWLGLDHDEGPFFQMQRMARYKEVLAQLVARGQVYPCYMSMTELDALRERQMANKEKPRYDGTWRPEPGKVLPAVPEGVQPVLRFRTPQGGSVIWDDKVKGRIEISNDELDDLVIARPDGTPTYNFCVVVDDIDMAITHVIRGDDHVNNTPRQIHIFRALGQEPPVYAHLPTVLNEQGEKMSKRHGAKPVTQYREEGFLADAVVNYLARLGWSHGDDEIFSRAQLIEWFNLDHLGKSAGQYDEAKLRWVNSQHMKLCDNGVLAGLVAEQFARRELLVPVDERLARMCALFKDRCSTTVELADWLSMYFVPIQASEQDLAAHVTDAVRPALQTLRDKLAALASWDKASISLCIKETIATHALKMPLLAVPVRVLVTGRAQTPSVDAVLELFQQEIVLKRLQSV.

The 'HIGH' region motif lies at 14–24 (PSPTGFIHLGN). Residues 246 to 250 (KMSKR) carry the 'KMSKS' region motif. ATP is bound at residue lysine 249.

This sequence belongs to the class-I aminoacyl-tRNA synthetase family. Glutamate--tRNA ligase type 1 subfamily. Monomer.

Its subcellular location is the cytoplasm. It carries out the reaction tRNA(Glu) + L-glutamate + ATP = L-glutamyl-tRNA(Glu) + AMP + diphosphate. Catalyzes the attachment of glutamate to tRNA(Glu) in a two-step reaction: glutamate is first activated by ATP to form Glu-AMP and then transferred to the acceptor end of tRNA(Glu). The sequence is that of Glutamate--tRNA ligase from Leptothrix cholodnii (strain ATCC 51168 / LMG 8142 / SP-6) (Leptothrix discophora (strain SP-6)).